Reading from the N-terminus, the 586-residue chain is Eukaryotic translation initiation factor 3 subunit D (586 aa).

Residues 107-154 (FGRGGGTVFRGRAQRGGAGQRGGRAGFQRVGAGRGQGGDRYYDNRGAR) are disordered. A compositionally biased stretch (gly residues) spans 108–131 (GRGGGTVFRGRAQRGGAGQRGGRA). Residues 301 to 315 (SLDLVTVNENAADAP) are RNA gate. The segment covering 566–577 (FEEDDEAAEEEQ) has biased composition (acidic residues). Residues 566 to 586 (FEEDDEAAEEEQEAKGEVEEA) form a disordered region.

It belongs to the eIF-3 subunit D family. Component of the eukaryotic translation initiation factor 3 (eIF-3) complex.

It localises to the cytoplasm. Its function is as follows. mRNA cap-binding component of the eukaryotic translation initiation factor 3 (eIF-3) complex, which is involved in protein synthesis of a specialized repertoire of mRNAs and, together with other initiation factors, stimulates binding of mRNA and methionyl-tRNAi to the 40S ribosome. The eIF-3 complex specifically targets and initiates translation of a subset of mRNAs involved in cell proliferation. In the eIF-3 complex, eif3d specifically recognizes and binds the 7-methylguanosine cap of a subset of mRNAs. The protein is Eukaryotic translation initiation factor 3 subunit D of Emericella nidulans (strain FGSC A4 / ATCC 38163 / CBS 112.46 / NRRL 194 / M139) (Aspergillus nidulans).